The following is a 629-amino-acid chain: tRNA uridine 5-carboxymethylaminomethyl modification enzyme MnmG (629 aa).

FAD is bound by residues 13 to 18, Val125, and Ser180; that span reads GGGHAG. An NAD(+)-binding site is contributed by 273–287; the sequence is GPRYCPSIEDKVMRF. Gln370 is a binding site for FAD.

It belongs to the MnmG family. As to quaternary structure, homodimer. Heterotetramer of two MnmE and two MnmG subunits. FAD serves as cofactor.

It is found in the cytoplasm. In terms of biological role, NAD-binding protein involved in the addition of a carboxymethylaminomethyl (cmnm) group at the wobble position (U34) of certain tRNAs, forming tRNA-cmnm(5)s(2)U34. This Klebsiella pneumoniae subsp. pneumoniae (strain ATCC 700721 / MGH 78578) protein is tRNA uridine 5-carboxymethylaminomethyl modification enzyme MnmG.